The primary structure comprises 497 residues: MEIVIRTGSGDVRGSKENGIAVFRGIPYAEPPVGAHRFTAPRPPRPWDGVRDATEFSATAPRPPYPEAIGALLIERFIPGDDYLTLNVWTPDPNAVGLPVMVWIHGGAFTNGSGSEPVYDGAAFARDGVVFVSFNYRLGIIGFADLPDAPSNRGLLDQIAALEWVRDNIARFGGDPGNVTVFGESAGAMSVCTLMATPRARGLFRRAILQSGAGNMAVAAEDATTIAAVIAHRLGVEPTAAALAHVPVAQLLDVQQQVAQEIQGAPDPAVWGERIAGGSVLLPFAPVIDGELLSQRPAEAIAGGAGHDVDLLFGTTTDEYRLFLAPTGLLPFITSDYVTAHLAKSGLDADAAKAYTAEGRGEEPGDILASIITDQVFRIPALRIAESRVDAPARTFGYEFAWRTPQLDGILGACHAVELPFVFRTLDRAASLVGTNPPEELAETVHNAWVRFATSGDPGWPAWNPETRSVMRFDHPVSEMVTDPYPATRALWDGVPL.

Ser-185 serves as the catalytic Acyl-ester intermediate. Active-site charge relay system residues include Glu-319 and His-415.

The protein belongs to the type-B carboxylesterase/lipase family.

It localises to the secreted. It carries out the reaction a carboxylic ester + H2O = an alcohol + a carboxylate + H(+). The sequence is that of Carboxylesterase from Thermobifida fusca (Thermomonospora fusca).